Reading from the N-terminus, the 185-residue chain is Pyruvate/ketoisovalerate oxidoreductases common subunit gamma (185 aa).

In terms of assembly, heterotetramer of one alpha, one beta, one delta and one gamma chain.

The enzyme catalyses 2 oxidized [2Fe-2S]-[ferredoxin] + pyruvate + CoA = 2 reduced [2Fe-2S]-[ferredoxin] + acetyl-CoA + CO2 + H(+). It catalyses the reaction 3-methyl-2-oxobutanoate + 2 oxidized [2Fe-2S]-[ferredoxin] + CoA = 2-methylpropanoyl-CoA + 2 reduced [2Fe-2S]-[ferredoxin] + CO2 + H(+). The polypeptide is Pyruvate/ketoisovalerate oxidoreductases common subunit gamma (porG) (Thermococcus litoralis (strain ATCC 51850 / DSM 5473 / JCM 8560 / NS-C)).